Here is a 258-residue protein sequence, read N- to C-terminus: Indole-3-glycerol phosphate synthase (258 aa).

It belongs to the TrpC family.

It carries out the reaction 1-(2-carboxyphenylamino)-1-deoxy-D-ribulose 5-phosphate + H(+) = (1S,2R)-1-C-(indol-3-yl)glycerol 3-phosphate + CO2 + H2O. Its pathway is amino-acid biosynthesis; L-tryptophan biosynthesis; L-tryptophan from chorismate: step 4/5. In Campylobacter jejuni (strain RM1221), this protein is Indole-3-glycerol phosphate synthase.